Here is a 368-residue protein sequence, read N- to C-terminus: FAD-dependent monooxygenase phomE (368 aa).

Residue Ala-11 participates in FAD binding. Active-site residues include Arg-140 and Tyr-178. Positions 249 and 262 each coordinate FAD.

The protein belongs to the paxM FAD-dependent monooxygenase family. In terms of assembly, monomer. The cofactor is FAD.

Its function is as follows. FAD-dependent monooxygenase; part of the gene cluster that mediates the biosynthesis of the phomopsins, a group of hexapeptide mycotoxins which infects lupins and causes lupinosis disease in livestock. The role of phomE within the phomopsins biosynthesis pathway has still to be determined. The pathway starts with the processing of the precursor phomA by several endopeptidases including kexin proteases as well as the cluster-specific S41 family peptidase phomP1 and the oligopeptidase phomG to produce 10 identical copies of the hexapeptide Tyr-Val-Ile-Pro-Ile-Asp. After being excised from the precursor peptide, the core peptides are cyclized and modified post-translationally by enzymes encoded within the gene cluster. The timing and order of proteolysis of the phomA precursor and PTMs are still unknown. Two tyrosinase-like enzymes, phomQ1 and phomQ2, catalyze the chlorination and hydroxylation of Tyr, respectively. PhomYb, is proposed to be involved in the construction of the macrocyclic structure. The other 4 ustYa family proteins may be involved in PTMs that generate the unique structure of phomopsin A. PhomYa is required for the hydroxylation of C-beta of Tyr. PhomYc, phomYd, and phomYe are responsible for the biosynthesis of 2,3-dehydroisoleucine (dIle), 2,3-dehydroaspartic acid (dAsp), and 3,4-dehydroproline (dPro), respectively. While dIle formation by phomYc is indispensable for the installation of dAsp by phomYd, the order of the other PTMs have not been elucidated yet. Most of the biosynthetic enzymes likely have broad substrate specificity, and thus, there might be a metabolic grid from a precursor to phomopsin A. The enzyme(s) responsible for the biosynthesis of 3,4-dehydrovaline (dVal) have also not been identified yet. Finally, phomM acts as an S-adenosylmethionine-dependent alpha-N-methyltransferase that catalyzes two successive N-methylation reactions, converting N-desmethyl-phomopsin A to phomopsin A and phomopsin A further to an N,N-dimethylated congener called phomopsin E. This chain is FAD-dependent monooxygenase phomE, found in Diaporthe leptostromiformis (Lupinosis disease fungus).